The primary structure comprises 281 residues: AT-hook motif nuclear-localized protein 20 (281 aa).

Disordered regions lie at residues 43 to 85 (MNQS…APIF) and 216 to 247 (MEEEEDGGGSRQIHGGGDSPPRIGSNLPDLSG). The a.T hook DNA-binding region spans 67–79 (RRPRGRPPGSKNK). In terms of domain architecture, PPC spans 91–229 (PNALRSHVLE…EDGGGSRQIH (139 aa)).

The protein localises to the nucleus. Functionally, transcription factor that specifically binds AT-rich DNA sequences related to the nuclear matrix attachment regions (MARs). Negatively regulates plant innate immunity (PTI) to pathogens through the down-regulation of the PAMP-triggered NHO1 and FRK1 expression. This Arabidopsis thaliana (Mouse-ear cress) protein is AT-hook motif nuclear-localized protein 20.